Consider the following 102-residue polypeptide: ATP-dependent Clp protease adapter protein ClpS (102 aa).

This sequence belongs to the ClpS family. Binds to the N-terminal domain of the chaperone ClpA.

Its function is as follows. Involved in the modulation of the specificity of the ClpAP-mediated ATP-dependent protein degradation. In Wolinella succinogenes (strain ATCC 29543 / DSM 1740 / CCUG 13145 / JCM 31913 / LMG 7466 / NCTC 11488 / FDC 602W) (Vibrio succinogenes), this protein is ATP-dependent Clp protease adapter protein ClpS.